A 72-amino-acid polypeptide reads, in one-letter code: Crustacean hyperglycemic hormone A (72 aa).

A Pyrrolidone carboxylic acid modification is found at Q1. A D-phenylalanine; in form CHHA-II modification is found at F3. Disulfide bonds link C7–C43, C23–C39, and C26–C52. At V72 the chain carries Valine amide.

Post-translationally, stereoinversion of L-Phe (in CHHA-I) to D-Phe (in CHHA-II).

The protein localises to the secreted. Hormone found in the sinus gland of isopods and decapods which controls the blood sugar level. Has a secretagogue action over the amylase released from the midgut gland. May act as a stress hormone and may be involved in the control of molting and reproduction. In Cherax destructor (Common yabby crayfish), this protein is Crustacean hyperglycemic hormone A.